The chain runs to 169 residues: Shikimate kinase (169 aa).

12–17 lines the ATP pocket; sequence AVGKTT. Mg(2+) is bound at residue Thr16. Substrate-binding residues include Asp34, Arg58, and Gly80. Residue Arg119 coordinates ATP. Arg139 contributes to the substrate binding site. Arg156 contributes to the ATP binding site.

Belongs to the shikimate kinase family. In terms of assembly, monomer. The cofactor is Mg(2+).

The protein resides in the cytoplasm. It carries out the reaction shikimate + ATP = 3-phosphoshikimate + ADP + H(+). It functions in the pathway metabolic intermediate biosynthesis; chorismate biosynthesis; chorismate from D-erythrose 4-phosphate and phosphoenolpyruvate: step 5/7. Catalyzes the specific phosphorylation of the 3-hydroxyl group of shikimic acid using ATP as a cosubstrate. This chain is Shikimate kinase, found in Alkaliphilus oremlandii (strain OhILAs) (Clostridium oremlandii (strain OhILAs)).